We begin with the raw amino-acid sequence, 279 residues long: Shikimate dehydrogenase (NADP(+)) (279 aa).

Residues 19–21 (SRS) and Thr-66 each bind shikimate. Lys-70 acts as the Proton acceptor in catalysis. 2 residues coordinate shikimate: Asn-91 and Asp-106. Residues 129 to 133 (GAGGA) and Phe-222 contribute to the NADP(+) site. Tyr-224 provides a ligand contact to shikimate. An NADP(+)-binding site is contributed by Gly-243.

It belongs to the shikimate dehydrogenase family. As to quaternary structure, homodimer.

It catalyses the reaction shikimate + NADP(+) = 3-dehydroshikimate + NADPH + H(+). The protein operates within metabolic intermediate biosynthesis; chorismate biosynthesis; chorismate from D-erythrose 4-phosphate and phosphoenolpyruvate: step 4/7. Involved in the biosynthesis of the chorismate, which leads to the biosynthesis of aromatic amino acids. Catalyzes the reversible NADPH linked reduction of 3-dehydroshikimate (DHSA) to yield shikimate (SA). In Anaeromyxobacter sp. (strain Fw109-5), this protein is Shikimate dehydrogenase (NADP(+)).